We begin with the raw amino-acid sequence, 800 residues long: Phenylalanine--tRNA ligase beta subunit (800 aa).

A tRNA-binding domain is found at 39-154; that stretch reads TKDIKNLVVG…ESQVPGTDAL (116 aa). In terms of domain architecture, B5 spans 408–483; the sequence is AFITPIDITA…RIYGYDDIPS (76 aa). Residues aspartate 461, aspartate 467, glutamate 470, and glutamate 471 each contribute to the Mg(2+) site. The region spanning 708 to 800 is the FDX-ACB domain; that stretch reads PRFPGMSRDI…ALIEQGAVIR (93 aa).

It belongs to the phenylalanyl-tRNA synthetase beta subunit family. Type 1 subfamily. Tetramer of two alpha and two beta subunits. Mg(2+) is required as a cofactor.

It is found in the cytoplasm. The enzyme catalyses tRNA(Phe) + L-phenylalanine + ATP = L-phenylalanyl-tRNA(Phe) + AMP + diphosphate + H(+). The polypeptide is Phenylalanine--tRNA ligase beta subunit (Staphylococcus aureus (strain MRSA252)).